The following is a 225-amino-acid chain: Probable septum site-determining protein MinC (225 aa).

The interval 87-112 (PTHMASPQGNSSKTRSSDTQPKPKTP) is disordered. Polar residues predominate over residues 91–108 (ASPQGNSSKTRSSDTQPK).

The protein belongs to the MinC family. As to quaternary structure, interacts with MinD and FtsZ.

Functionally, cell division inhibitor that blocks the formation of polar Z ring septums. Rapidly oscillates between the poles of the cell to destabilize FtsZ filaments that have formed before they mature into polar Z rings. Prevents FtsZ polymerization. The chain is Probable septum site-determining protein MinC from Prochlorococcus marinus (strain MIT 9313).